The chain runs to 429 residues: Phosphoribosylamine--glycine ligase (429 aa).

One can recognise an ATP-grasp domain in the interval 109–316; the sequence is KDFLARHNIP…LVELCLAACE (208 aa). 135–196 contacts ATP; it reads LREKGAPIVI…EEFLDGEEAS (62 aa). The tract at residues 212-237 is disordered; it reads SQDHKRVGDKDTGPNTGGMGAYSPAP. Over residues 213–223 the composition is skewed to basic and acidic residues; that stretch reads QDHKRVGDKDT. 2 residues coordinate Mg(2+): Glu-286 and Asn-288.

This sequence belongs to the GARS family. In terms of assembly, monomer. Mg(2+) serves as cofactor. Mn(2+) is required as a cofactor.

The enzyme catalyses 5-phospho-beta-D-ribosylamine + glycine + ATP = N(1)-(5-phospho-beta-D-ribosyl)glycinamide + ADP + phosphate + H(+). It participates in purine metabolism; IMP biosynthesis via de novo pathway; N(1)-(5-phospho-D-ribosyl)glycinamide from 5-phospho-alpha-D-ribose 1-diphosphate: step 2/2. The chain is Phosphoribosylamine--glycine ligase from Escherichia coli O157:H7.